Consider the following 460-residue polypeptide: Chromosomal replication initiator protein DnaA (460 aa).

The interval 1–73 is domain I, interacts with DnaA modulators; the sequence is MEISIDSLWS…ANVVQSILGH (73 aa). Positions 73–116 are domain II; sequence HPVEIYITVAKGEEFEEIGGGGAWELPTTNSIYETPNQNRQPNT. Positions 117–333 are domain III, AAA+ region; the sequence is ELNAKYVFSR…GALTRALAYI (217 aa). Positions 161, 163, 164, and 165 each coordinate ATP. Residues 334-460 are domain IV, binds dsDNA; the sequence is SIWGLPMTVA…MNSRSRKPSL (127 aa).

The protein belongs to the DnaA family. Oligomerizes as a right-handed, spiral filament on DNA at oriC.

It localises to the cytoplasm. In terms of biological role, plays an essential role in the initiation and regulation of chromosomal replication. ATP-DnaA binds to the origin of replication (oriC) to initiate formation of the DNA replication initiation complex once per cell cycle. Binds the DnaA box (a 9 base pair repeat at the origin) and separates the double-stranded (ds)DNA. Forms a right-handed helical filament on oriC DNA; dsDNA binds to the exterior of the filament while single-stranded (ss)DNA is stabiized in the filament's interior. The ATP-DnaA-oriC complex binds and stabilizes one strand of the AT-rich DNA unwinding element (DUE), permitting loading of DNA polymerase. After initiation quickly degrades to an ADP-DnaA complex that is not apt for DNA replication. Binds acidic phospholipids. In Trichormus variabilis (strain ATCC 29413 / PCC 7937) (Anabaena variabilis), this protein is Chromosomal replication initiator protein DnaA.